A 278-amino-acid chain; its full sequence is Short-chain dehydrogenase RED2 (278 aa).

NADP(+)-binding residues include Ile15, Asp70, Arg132, Tyr178, Lys182, Val211, and Thr213. Catalysis depends on Tyr178, which acts as the Proton donor. The Lowers pKa of active site Tyr role is filled by Lys182.

This sequence belongs to the short-chain dehydrogenases/reductases (SDR) family.

Its pathway is polyketide biosynthesis. Its function is as follows. Short-chain dehydrogenase; part of the gene cluster that mediates the biosynthesis of pyriculol and pyriculariol, two heptaketides that induce lesion formation upon application on rice leaves but are dispensable for pathogenicity. The highly reducing polyketide synthase synthesizes the heptaketide backbone of pyriculol and pyriculariol. Pyriculol and pyriculariol contain several hydroxyl moieties and double bonds, so it can be assumed that several reduction steps occur during biosynthesis. These reactions could be executed by PKS19 itself or partly by the tailoring enzymes OXR1, OXR2, RED1, RED2 or RED3, identified within the cluster. The FAD-linked oxidoreductase OXR1 is the only tailoring enzyme for which the function has been determined yet, and is involved in the oxidation of dihydropyriculol and dihydropyriculariol into pyriculol and pyriculariol, respectively. The sequence is that of Short-chain dehydrogenase RED2 from Pyricularia oryzae (strain 70-15 / ATCC MYA-4617 / FGSC 8958) (Rice blast fungus).